The sequence spans 453 residues: Autophagy-related protein 21 (453 aa).

The WD 1 repeat unit spans residues 4–137; it reads LRFNQDASCC…NDQIFIYDIS (134 aa). The disordered stretch occupies residues 177–207; that stretch reads GNELDRIRSKSNNNNDQTNSDNGRSRTYSIN. The span at 187–198 shows a compositional bias: low complexity; sequence SNNNNDQTNSDN. WD repeat units follow at residues 252–347 and 419–453; these read NLKP…RTDD and FDNKIYVASDDGSFKTYTIPSKHGQCVLNKTSHFI. The L/FRRG motif motif lies at 310 to 314; it reads FRRGS.

The protein belongs to the WD repeat PROPPIN family.

It localises to the cytoplasm. Its subcellular location is the membrane. It is found in the vacuole membrane. Its function is as follows. Required for cytoplasm to vacuole transport (Cvt) vesicles formation and mitophagy. Involved in binding of phosphatidylethanolamine to ATG8 and in recruitment of ATG8 and ATG5 to the pre-autophagosomal structure. Protects ATG8 from ARG4-mediated cleavage. The protein is Autophagy-related protein 21 (ATG21) of Candida glabrata (strain ATCC 2001 / BCRC 20586 / JCM 3761 / NBRC 0622 / NRRL Y-65 / CBS 138) (Yeast).